Reading from the N-terminus, the 287-residue chain is Large ribosomal subunit protein uL2 (287 aa).

The tract at residues 203-287 is disordered; sequence LSAGKAGRNR…SKRGRGGRES (85 aa). 2 stretches are compositionally biased toward basic residues: residues 209 to 220 and 258 to 287; these read GRNRWKGRRPKV and KTRK…GRES.

Belongs to the universal ribosomal protein uL2 family. As to quaternary structure, part of the 50S ribosomal subunit. Forms a bridge to the 30S subunit in the 70S ribosome.

In terms of biological role, one of the primary rRNA binding proteins. Required for association of the 30S and 50S subunits to form the 70S ribosome, for tRNA binding and peptide bond formation. It has been suggested to have peptidyltransferase activity; this is somewhat controversial. Makes several contacts with the 16S rRNA in the 70S ribosome. In Nostoc sp. (strain PCC 7120 / SAG 25.82 / UTEX 2576), this protein is Large ribosomal subunit protein uL2.